The following is a 1026-amino-acid chain: uncharacterized protein (1026 aa).

WD repeat units lie at residues 14–53 (LLDE…HFTL), 62–104 (HSVS…RRAT), 148–187 (GHED…LTFK), and 937–977 (NAEC…VKFL).

Its subcellular location is the cytoplasm. It is found in the nucleus. This is an uncharacterized protein from Schizosaccharomyces pombe (strain 972 / ATCC 24843) (Fission yeast).